We begin with the raw amino-acid sequence, 229 residues long: Nectarin-1 (229 aa).

The signal sequence occupies residues 1–32 (MAAFGIKSKIFQIMEMTILFLFAISIDRYCFA). A disulfide bond links Cys-42 and Cys-57. A glycan (N-linked (GlcNAc...) asparagine) is linked at Asn-60. Residues 69-217 (FAISKPGATN…TFQINIEDVQ (149 aa)) enclose the Cupin type-1 domain. 4 residues coordinate Mn(2+): His-117, His-119, Glu-124, and His-163.

This sequence belongs to the germin family. As to quaternary structure, monomer. In the absence of manganese, it forms tetrameric and pentameric forms which show superoxide dismutase activity. Requires Mn(2+) as cofactor. In terms of processing, glycosylated.

Its subcellular location is the secreted. It localises to the extracellular space. The protein resides in the apoplast. It carries out the reaction 2 superoxide + 2 H(+) = H2O2 + O2. Its function is as follows. May interact with bacterial adhesins thereby protecting the reproductive tissues from microbial attack. Has no oxalate oxidase activity. The polypeptide is Nectarin-1 (NEC1) (Nicotiana plumbaginifolia (Leadwort-leaved tobacco)).